Consider the following 185-residue polypeptide: MLPEVCYKHFTIFGDELLKWNKIHNLTGASSIESVMENIFDSLYPLRFIDDFTSCMDIGSGGGFPAIPLAIAKPQSHFILIEPRNKRSCFLQNIIIQLELNNVQVRPIRIQDVPIAEVNNLDLITSRALMDAKELISLSRKFLKSEGYFLLYKGTRFRQETPSMSIEECFTRENRIYYYKHSRDL.

Residues G59, F64, I110–Q111, and R127 contribute to the S-adenosyl-L-methionine site.

This sequence belongs to the methyltransferase superfamily. RNA methyltransferase RsmG family.

The protein resides in the cytoplasm. The catalysed reaction is guanosine(527) in 16S rRNA + S-adenosyl-L-methionine = N(7)-methylguanosine(527) in 16S rRNA + S-adenosyl-L-homocysteine. Functionally, specifically methylates the N7 position of guanine in position 527 of 16S rRNA. The sequence is that of Ribosomal RNA small subunit methyltransferase G from Helicobacter hepaticus (strain ATCC 51449 / 3B1).